A 462-amino-acid chain; its full sequence is Gamma-aminobutyric acid receptor subunit alpha-5 (462 aa).

The N-terminal stretch at 1 to 31 (MDNGMFSSFIMIKNLLLFCISMNLASHFGFS) is a signal peptide. The Extracellular segment spans residues 32-260 (QMPTSSVKAE…FHLKRKIGYF (229 aa)). Asn-45 carries N-linked (GlcNAc...) asparagine glycosylation. Residue Arg-101 participates in 4-aminobutanoate binding. N-linked (GlcNAc...) asparagine glycosylation is present at Asn-145. Thr-164 lines the 4-aminobutanoate pocket. The cysteines at positions 173 and 187 are disulfide-linked. N-linked (GlcNAc...) asparagine glycans are attached at residues Asn-207 and Asn-236. 3 consecutive transmembrane segments (helical) span residues 261 to 281 (VIQT…SFWL), 287 to 308 (PART…ISAR), and 319 to 340 (AMDW…EFAT). Over 341–427 (VNYFTKRGWA…TYNSISKIDK (87 aa)) the chain is Cytoplasmic. Lys-355 participates in a covalent cross-link: Glycyl lysine isopeptide (Lys-Gly) (interchain with G-Cter in ubiquitin). Residues 375–412 (TNAYTTGKMTHPPNIPKEQTPAGTTNASSASVKPEDKA) are disordered. Over residues 395 to 405 (PAGTTNASSAS) the composition is skewed to polar residues. The chain crosses the membrane as a helical span at residues 428 to 448 (MSRIIFPLLFGTFNLVYWATY).

The protein belongs to the ligand-gated ion channel (TC 1.A.9) family. Gamma-aminobutyric acid receptor (TC 1.A.9.5) subfamily. GABRA5 sub-subfamily. As to quaternary structure, heteropentamer, formed by a combination of alpha (GABRA1-6), beta (GABRB1-3), gamma (GABRG1-3), delta (GABRD), epsilon (GABRE), rho (GABRR1-3), pi (GABRP) and theta (GABRQ) chains, each subunit exhibiting distinct physiological and pharmacological properties.

It localises to the postsynaptic cell membrane. The protein resides in the cell membrane. It catalyses the reaction chloride(in) = chloride(out). Its function is as follows. Alpha subunit of the heteropentameric ligand-gated chloride channel gated by gamma-aminobutyric acid (GABA), a major inhibitory neurotransmitter in the brain. GABA-gated chloride channels, also named GABA(A) receptors (GABAAR), consist of five subunits arranged around a central pore and contain GABA active binding site(s) located at the alpha and beta subunit interface(s). When activated by GABA, GABAARs selectively allow the flow of chloride anions across the cell membrane down their electrochemical gradient. GABAARs containing alpha-5/GABRA5 subunits are mainly extrasynaptic and contribute to the tonic GABAergic inhibition in the hippocampus. Extrasynaptic alpha-5-containing GABAARs in CA1 pyramidal neurons play a role in learning and memory processes. This is Gamma-aminobutyric acid receptor subunit alpha-5 (GABRA5) from Bos taurus (Bovine).